Consider the following 99-residue polypeptide: MKINHAAVAGTLESSDVMVRIAPIEDDQALDLQISSSVEKQFGDAIRATVLDVLNRYQVRGIQLIVDDKGALDCVLRARLETLLARAADLVSLPWEDRA.

Serine 14 is modified (O-(phosphoribosyl dephospho-coenzyme A)serine).

It belongs to the CitD family. As to quaternary structure, oligomer with a subunit composition of (alpha,beta,gamma)6.

Its subcellular location is the cytoplasm. Covalent carrier of the coenzyme of citrate lyase. The protein is Citrate lyase acyl carrier protein of Edwardsiella ictaluri (strain 93-146).